A 1374-amino-acid chain; its full sequence is DNA-directed RNA polymerase subunit beta (1374 aa).

It belongs to the RNA polymerase beta chain family. The RNAP catalytic core consists of 2 alpha, 1 beta, 1 beta' and 1 omega subunit. When a sigma factor is associated with the core the holoenzyme is formed, which can initiate transcription.

The catalysed reaction is RNA(n) + a ribonucleoside 5'-triphosphate = RNA(n+1) + diphosphate. DNA-dependent RNA polymerase catalyzes the transcription of DNA into RNA using the four ribonucleoside triphosphates as substrates. In Paracidovorax citrulli (strain AAC00-1) (Acidovorax citrulli), this protein is DNA-directed RNA polymerase subunit beta.